The following is a 113-amino-acid chain: Large ribosomal subunit protein bL17 (113 aa).

It belongs to the bacterial ribosomal protein bL17 family. Part of the 50S ribosomal subunit. Contacts protein L32.

This Clostridium botulinum (strain Alaska E43 / Type E3) protein is Large ribosomal subunit protein bL17.